Reading from the N-terminus, the 268-residue chain is Orotidine 5'-phosphate decarboxylase (268 aa).

Substrate contacts are provided by residues Asp-39, 61 to 63 (KTH), 93 to 102 (DRKFADIGNT), Tyr-219, and Arg-237. Residue Lys-95 is the Proton donor of the active site.

This sequence belongs to the OMP decarboxylase family.

It catalyses the reaction orotidine 5'-phosphate + H(+) = UMP + CO2. Its pathway is pyrimidine metabolism; UMP biosynthesis via de novo pathway; UMP from orotate: step 2/2. This chain is Orotidine 5'-phosphate decarboxylase (URA3), found in Pachysolen tannophilus (Yeast).